Consider the following 335-residue polypeptide: Tryptophan--tRNA ligase (335 aa).

Residues 11-13 and 19-20 contribute to the ATP site; these read QPT and GN. Positions 12 to 20 match the 'HIGH' region motif; the sequence is PTGNLHLGN. Asp135 contributes to the L-tryptophan binding site. Residues 147 to 149, Val189, and 198 to 202 each bind ATP; these read GED and KMSKS. The 'KMSKS' region signature appears at 198–202; that stretch reads KMSKS.

It belongs to the class-I aminoacyl-tRNA synthetase family. In terms of assembly, homodimer.

The protein localises to the cytoplasm. It carries out the reaction tRNA(Trp) + L-tryptophan + ATP = L-tryptophyl-tRNA(Trp) + AMP + diphosphate + H(+). Its function is as follows. Catalyzes the attachment of tryptophan to tRNA(Trp). The sequence is that of Tryptophan--tRNA ligase from Nostoc sp. (strain PCC 7120 / SAG 25.82 / UTEX 2576).